Consider the following 112-residue polypeptide: DNA-binding protein Mboo_1886 (112 aa).

The protein belongs to the PDCD5 family.

The polypeptide is DNA-binding protein Mboo_1886 (Methanoregula boonei (strain DSM 21154 / JCM 14090 / 6A8)).